The following is a 512-amino-acid chain: Inositol-3-phosphate synthase (512 aa).

NAD(+)-binding residues include glycine 72, glycine 73, asparagine 74, asparagine 75, aspartate 145, isoleucine 182, glutamine 192, arginine 195, threonine 232, glycine 233, asparagine 234, threonine 235, glycine 283, serine 284, aspartate 308, serine 311, asparagine 342, asparagine 343, aspartate 344, lysine 357, glycine 395, aspartate 396, aspartate 424, and serine 425.

This sequence belongs to the myo-inositol 1-phosphate synthase family. NAD(+) is required as a cofactor.

The protein resides in the cytoplasm. The protein localises to the cytosol. It is found in the nucleus. The catalysed reaction is D-glucose 6-phosphate = 1D-myo-inositol 3-phosphate. It participates in polyol metabolism; myo-inositol biosynthesis; myo-inositol from D-glucose 6-phosphate: step 1/2. Functionally, key enzyme in myo-inositol biosynthesis pathway that catalyzes the conversion of glucose 6-phosphate to 1-myo-inositol 1-phosphate in a NAD-dependent manner. The sequence is that of Inositol-3-phosphate synthase from Mesembryanthemum crystallinum (Common ice plant).